The sequence spans 418 residues: Tyrosine--tRNA ligase (418 aa).

Tyrosine 34 is a binding site for L-tyrosine. The 'HIGH' region signature appears at 39–48 (PTADSLHLGH). L-tyrosine-binding residues include tyrosine 169 and glutamine 173. Residues 229-233 (KFGKS) carry the 'KMSKS' region motif. Residue lysine 232 participates in ATP binding. In terms of domain architecture, S4 RNA-binding spans 352–418 (LNIVDMLVTA…GKKKYAVLTY (67 aa)).

Belongs to the class-I aminoacyl-tRNA synthetase family. TyrS type 1 subfamily. In terms of assembly, homodimer.

The protein localises to the cytoplasm. It catalyses the reaction tRNA(Tyr) + L-tyrosine + ATP = L-tyrosyl-tRNA(Tyr) + AMP + diphosphate + H(+). In terms of biological role, catalyzes the attachment of tyrosine to tRNA(Tyr) in a two-step reaction: tyrosine is first activated by ATP to form Tyr-AMP and then transferred to the acceptor end of tRNA(Tyr). This is Tyrosine--tRNA ligase from Streptococcus equi subsp. zooepidemicus (strain H70).